The sequence spans 581 residues: Estrogen receptor (581 aa).

The segment at 1 to 144 is modulating; the sequence is MYPEDSRVSG…GFEMAKEMRF (144 aa). 2 disordered regions span residues 45 to 66 and 99 to 123; these read APLD…SGPN and RSSV…DSYS. Polar residues predominate over residues 56 to 66; sequence GSLQSLGSGPN. The segment at residues 142-217 is a DNA-binding region (nuclear receptor); the sequence is MRFCAVCSDY…VGMMKGGVRK (76 aa). NR C4-type zinc fingers lie at residues 145 to 165 and 181 to 200; these read CAVC…CEGC and CPAT…CQAC. The hinge stretch occupies residues 211–272; that stretch reads MKGGVRKDRG…GGGKSSVISM (62 aa). Positions 216–246 are enriched in basic and acidic residues; sequence RKDRGRVLRRDKRRTGTSDRDKASKGLEHRT. The tract at residues 216–269 is disordered; sequence RKDRGRVLRRDKRRTGTSDRDKASKGLEHRTAPPQDRRKHISSSAGGGGGKSSV. Residues 273–509 enclose the NR LBD domain; sequence PPDQVLLLLR…DLLLEMLDAH (237 aa). The span at 514–528 shows a compositional bias: basic and acidic residues; the sequence is PDRPAETWSQADREP. The interval 514-581 is disordered; that stretch reads PDRPAETWSQ…VHPHPMKPTE (68 aa). Over residues 572–581 the composition is skewed to basic residues; it reads VHPHPMKPTE.

The protein belongs to the nuclear hormone receptor family. NR3 subfamily. Binds DNA as a homodimer. Can form a heterodimer with ER-beta.

It localises to the nucleus. The steroid hormones and their receptors are involved in the regulation of eukaryotic gene expression and affect cellular proliferation and differentiation in target tissues. In Sparus aurata (Gilthead sea bream), this protein is Estrogen receptor (esr1).